The primary structure comprises 503 residues: Na(+)-translocating NADH-quinone reductase subunit B (503 aa).

4 helical membrane passes run 55 to 75 (MILVVVALFPATFSAIWNSGV), 120 to 142 (IFLPLLIISYSVGGACEVLFAVI), 161 to 181 (TLPPTIPYWMAALGIAFGVVV), and 186 to 206 (FGGTGMNILNPALSGRAFLFF). T248 carries the post-translational modification FMN phosphoryl threonine. 5 helical membrane-spanning segments follow: residues 361 to 381 (TSTFACLLGAIFLIVTGIASW), 387 to 407 (FGIGAFVTAWLFKIVSILIVG), 417 to 437 (FFIPAYRQLFLGGLAFGLVFM), 452 to 472 (WIYGLFIGFMTILIRLINPAY), and 475 to 495 (GVMLAILLGNVFAPLLDYFAV).

The protein belongs to the NqrB/RnfD family. Composed of six subunits; NqrA, NqrB, NqrC, NqrD, NqrE and NqrF. It depends on FMN as a cofactor.

It is found in the cell inner membrane. It catalyses the reaction a ubiquinone + n Na(+)(in) + NADH + H(+) = a ubiquinol + n Na(+)(out) + NAD(+). Its function is as follows. NQR complex catalyzes the reduction of ubiquinone-1 to ubiquinol by two successive reactions, coupled with the transport of Na(+) ions from the cytoplasm to the periplasm. NqrA to NqrE are probably involved in the second step, the conversion of ubisemiquinone to ubiquinol. The sequence is that of Na(+)-translocating NADH-quinone reductase subunit B from Chlamydia felis (strain Fe/C-56) (Chlamydophila felis).